A 398-amino-acid polypeptide reads, in one-letter code: ATP-dependent RNA helicase eIF4A (398 aa).

The Q motif signature appears at 25–53 (DSFDAMNLRAELLRGVYAYGFERPSAIQQ). Positions 56 to 226 (IMPVIKGSDV…TKFMRDPVRI (171 aa)) constitute a Helicase ATP-binding domain. 69–76 (AQSGTGKT) lines the ATP pocket. The DEAD box motif lies at 174-177 (DEAD). Residues 237–398 (GIKQFYIAVE…EMPMNVADLI (162 aa)) form the Helicase C-terminal domain.

This sequence belongs to the DEAD box helicase family. eIF4A subfamily. Component of the eIF4F complex, which composition varies with external and internal environmental conditions. It is composed of at least eIF4A, eIF4E and eIF4G.

Its subcellular location is the cytoplasm. The catalysed reaction is ATP + H2O = ADP + phosphate + H(+). Functionally, ATP-dependent RNA helicase which is a subunit of the eIF4F complex involved in cap recognition and is required for mRNA binding to ribosome. In the current model of translation initiation, eIF4A unwinds RNA secondary structures in the 5'-UTR of mRNAs which is necessary to allow efficient binding of the small ribosomal subunit, and subsequent scanning for the initiator codon. The polypeptide is ATP-dependent RNA helicase eIF4A (TIF1) (Coccidioides immitis (strain RS) (Valley fever fungus)).